The following is a 97-amino-acid chain: Citrate lyase acyl carrier protein (97 aa).

Residue serine 14 is modified to O-(phosphoribosyl dephospho-coenzyme A)serine.

This sequence belongs to the CitD family. In terms of assembly, oligomer with a subunit composition of (alpha,beta,gamma)6.

The protein resides in the cytoplasm. Its function is as follows. Covalent carrier of the coenzyme of citrate lyase. The polypeptide is Citrate lyase acyl carrier protein (Escherichia fergusonii (strain ATCC 35469 / DSM 13698 / CCUG 18766 / IAM 14443 / JCM 21226 / LMG 7866 / NBRC 102419 / NCTC 12128 / CDC 0568-73)).